A 70-amino-acid chain; its full sequence is Protein SlyX homolog (70 aa).

This sequence belongs to the SlyX family.

This Shewanella pealeana (strain ATCC 700345 / ANG-SQ1) protein is Protein SlyX homolog.